The sequence spans 220 residues: Ribonuclease HII (220 aa).

Positions 32 to 220 constitute an RNase H type-2 domain; it reads KHIAGIDEAG…FAPIKGRFDC (189 aa). A divalent metal cation contacts are provided by D38, E39, and D130.

This sequence belongs to the RNase HII family. Mn(2+) serves as cofactor. Mg(2+) is required as a cofactor.

It is found in the cytoplasm. It carries out the reaction Endonucleolytic cleavage to 5'-phosphomonoester.. In terms of biological role, endonuclease that specifically degrades the RNA of RNA-DNA hybrids. The sequence is that of Ribonuclease HII from Brucella ovis (strain ATCC 25840 / 63/290 / NCTC 10512).